Reading from the N-terminus, the 695-residue chain is Adhesion G protein-coupled receptor F4 (695 aa).

The signal sequence occupies residues 1 to 21 (MKMKSQATMICCLVFFLSTEC). Over 22-406 (SHYRSKIHLK…TDKVLDYITC (385 aa)) the chain is Extracellular. 12 N-linked (GlcNAc...) asparagine glycosylation sites follow: N61, N169, N177, N209, N229, N250, N257, N263, N264, N286, N309, and N340. In terms of domain architecture, GAIN-B spans 249–397 (HNTSEKSLNF…SILMSSKSMT (149 aa)). 2 disulfide bridges follow: C349–C376 and C364–C378. Residues 349-397 (CVGWHSKKRRWDEKACQMMLDIRNEVKCRCNYTSVVMSFSILMSSKSMT) are GPS. An N-linked (GlcNAc...) asparagine glycan is attached at N379. A helical membrane pass occupies residues 407-427 (IGLSVSILSLVLCLIIEATVW). Over 428-440 (SRVVVTEISYMRH) the chain is Cytoplasmic. A helical membrane pass occupies residues 441 to 461 (VCIVNIAVSLLTANVWFIIGS). The Extracellular segment spans residues 462 to 485 (HFNIKAQDYNMCVAVTFFSHFFYL). Residues 486–506 (SLFFWMLFKALLIIYGILVIF) form a helical membrane-spanning segment. Topologically, residues 507-515 (RRMMKSRMM) are cytoplasmic. A helical transmembrane segment spans residues 516–536 (VIGFAIGYGCPLIIAVTTVAI). Over 537–561 (TEPEKGYMRPEACWLNWDNTKALLA) the chain is Extracellular. The chain crosses the membrane as a helical span at residues 562 to 582 (FAIPAFVIVAVNLIVVLVVAV). Residues 583-606 (NTQRPSIGSSKSQDVVIIMRISKN) are Cytoplasmic-facing. Residues 607–627 (VAILTPLLGLTWGFGIATLIE) form a helical membrane-spanning segment. The Extracellular segment spans residues 628–634 (GTSLTFH). Residues 635-655 (IIFALLNAFQGFFILLFGTIM) traverse the membrane as a helical segment. Residues 656–695 (DHKIRDALRMRMSSLKGKSRAAENASLGPTNGSKLMNRQG) lie on the Cytoplasmic side of the membrane. The interval 674–695 (SRAAENASLGPTNGSKLMNRQG) is disordered. The segment covering 682-695 (LGPTNGSKLMNRQG) has biased composition (polar residues).

Belongs to the G-protein coupled receptor 2 family. Adhesion G-protein coupled receptor (ADGR) subfamily.

It localises to the membrane. Functionally, orphan receptor. The protein is Adhesion G protein-coupled receptor F4 (ADGRF4) of Homo sapiens (Human).